A 91-amino-acid polypeptide reads, in one-letter code: Large ribosomal subunit protein eL31 (91 aa).

Belongs to the eukaryotic ribosomal protein eL31 family.

This chain is Large ribosomal subunit protein eL31, found in Pyrobaculum calidifontis (strain DSM 21063 / JCM 11548 / VA1).